Reading from the N-terminus, the 123-residue chain is Fluoride-specific ion channel FluC (123 aa).

Transmembrane regions (helical) follow at residues 5-25 (IIALLIIGGGLGALTRYYISG), 35-55 (IGTLIVNSLASFLLGYIYGLL), 67-87 (IFLGTGFCGGLSTFSTFSYET), and 100-120 (FANITTNILVTIFLVFLGFIL). Residues G75 and S78 each coordinate Na(+).

The protein belongs to the fluoride channel Fluc/FEX (TC 1.A.43) family.

It is found in the cell membrane. It carries out the reaction fluoride(in) = fluoride(out). With respect to regulation, na(+) is not transported, but it plays an essential structural role and its presence is essential for fluoride channel function. Its function is as follows. Fluoride-specific ion channel. Important for reducing fluoride concentration in the cell, thus reducing its toxicity. In Pyrococcus horikoshii (strain ATCC 700860 / DSM 12428 / JCM 9974 / NBRC 100139 / OT-3), this protein is Fluoride-specific ion channel FluC.